The chain runs to 350 residues: GDSL esterase/lipase At2g42990 (350 aa).

The N-terminal stretch at 1–24 (MATHYLSPSILCIILTTLVSIAGA) is a signal peptide. The active-site Nucleophile is serine 35. 3 N-linked (GlcNAc...) asparagine glycosylation sites follow: asparagine 98, asparagine 117, and asparagine 141. Active-site residues include aspartate 325 and histidine 328.

Belongs to the 'GDSL' lipolytic enzyme family.

Its subcellular location is the secreted. The polypeptide is GDSL esterase/lipase At2g42990 (Arabidopsis thaliana (Mouse-ear cress)).